A 283-amino-acid polypeptide reads, in one-letter code: Co-chaperone protein DjlA (283 aa).

Residues Met-1–Lys-6 are Periplasmic-facing. Residues Ile-7–His-30 form a helical membrane-spanning segment. The Cytoplasmic segment spans residues Gln-31–Lys-283. A compositionally biased stretch (gly residues) spans Gln-188–Ser-197. The interval Gln-188–Ser-210 is disordered. Residues Gly-198–Ser-210 show a composition bias toward low complexity. Positions Asp-217–Lys-283 constitute a J domain.

As to quaternary structure, homodimer.

The protein resides in the cell inner membrane. Its function is as follows. Regulatory DnaK co-chaperone. Direct interaction between DnaK and DjlA is needed for the induction of the wcaABCDE operon, involved in the synthesis of a colanic acid polysaccharide capsule, possibly through activation of the RcsB/RcsC phosphotransfer signaling pathway. The colanic acid capsule may help the bacterium survive conditions outside the host. This Aliivibrio fischeri (strain ATCC 700601 / ES114) (Vibrio fischeri) protein is Co-chaperone protein DjlA.